The sequence spans 526 residues: Cytochrome P450 4e2 (526 aa).

Glu307 and Cys444 together coordinate heme.

This sequence belongs to the cytochrome P450 family. Requires heme as cofactor.

Its subcellular location is the endoplasmic reticulum membrane. The protein localises to the microsome membrane. In terms of biological role, may be involved in the metabolism of insect hormones and in the breakdown of synthetic insecticides. The polypeptide is Cytochrome P450 4e2 (Cyp4e2) (Drosophila melanogaster (Fruit fly)).